A 726-amino-acid chain; its full sequence is Peroxisomal bifunctional enzyme (726 aa).

Residues 1 to 284 (MAEYLRLPHS…FAERSAPKWS (284 aa)) are enoyl-CoA hydratase / isomerase. At lysine 38 the chain carries N6-succinyllysine. A substrate-binding site is contributed by glycine 103. Lysine 167 bears the N6-acetyllysine; alternate mark. Lysine 167 carries the N6-succinyllysine; alternate modification. Lysine 173 is subject to N6-acetyllysine. Residue lysine 185 is modified to N6-succinyllysine. An N6-acetyllysine; alternate modification is found at lysine 221. An N6-succinyllysine; alternate modification is found at lysine 221. Residues lysine 282, lysine 292, and lysine 333 each carry the N6-succinyllysine modification. The 3-hydroxyacyl-CoA dehydrogenase stretch occupies residues 285–575 (TPSGASWKTA…DMLCELGRFG (291 aa)). 2 positions are modified to N6-acetyllysine: lysine 348 and lysine 352. The disordered stretch occupies residues 352–371 (KSRQQCGQQRSGPKPRFSSS). Residues 353–371 (SRQQCGQQRSGPKPRFSSS) show a composition bias toward polar residues. N6-acetyllysine is present on lysine 467. At lysine 535 the chain carries N6-succinyllysine. Residues lysine 587, lysine 594, and lysine 713 each carry the N6-acetyllysine; alternate modification. N6-succinyllysine; alternate is present on residues lysine 587, lysine 594, and lysine 713. The Microbody targeting signal motif lies at 724–726 (SKL). N6-succinyllysine is present on lysine 725.

The protein in the N-terminal section; belongs to the enoyl-CoA hydratase/isomerase family. In the C-terminal section; belongs to the 3-hydroxyacyl-CoA dehydrogenase family. In terms of assembly, monomer. Post-translationally, acetylated, leading to enhanced enzyme activity. Acetylation is enhanced by up to 80% after treatment either with trichostin A (TSA) or with nicotinamide (NAM) with highest increase on Lys-348. Acetylation and enzyme activity increased by about 1.5% on addition of fatty acids.

The protein resides in the peroxisome. The enzyme catalyses a (3S)-3-hydroxyacyl-CoA = a (2E)-enoyl-CoA + H2O. The catalysed reaction is a 4-saturated-(3S)-3-hydroxyacyl-CoA = a (3E)-enoyl-CoA + H2O. It carries out the reaction a (3Z)-enoyl-CoA = a 4-saturated (2E)-enoyl-CoA. It catalyses the reaction a (3E)-enoyl-CoA = a 4-saturated (2E)-enoyl-CoA. The enzyme catalyses a (3S)-3-hydroxyacyl-CoA + NAD(+) = a 3-oxoacyl-CoA + NADH + H(+). The catalysed reaction is (2S,3S)-3-hydroxy-2-methylbutanoyl-CoA = (2E)-2-methylbut-2-enoyl-CoA + H2O. It carries out the reaction (3S)-hydroxyhexadecanoyl-CoA + NAD(+) = 3-oxohexadecanoyl-CoA + NADH + H(+). It catalyses the reaction (3S)-hydroxyhexadecanoyl-CoA = (2E)-hexadecenoyl-CoA + H2O. The enzyme catalyses (2E)-hexadecenedioyl-CoA + H2O = (3S)-hydroxyhexadecanedioyl-CoA. The catalysed reaction is (3S)-hydroxyhexadecanedioyl-CoA + NAD(+) = 3-oxohexadecanedioyl-CoA + NADH + H(+). It carries out the reaction (3E,5Z)-tetradecadienoyl-CoA = (2E,5Z)-tetradecadienoyl-CoA. It catalyses the reaction (3E,5Z)-octadienoyl-CoA = (2E,5Z)-octadienoyl-CoA. The enzyme catalyses (3S)-hydroxydecanoyl-CoA + NAD(+) = 3-oxodecanoyl-CoA + NADH + H(+). The catalysed reaction is (3E)-decenoyl-CoA = (2E)-decenoyl-CoA. It carries out the reaction (3Z)-hexenoyl-CoA = (2E)-hexenoyl-CoA. It catalyses the reaction (3E)-hexenoyl-CoA = (2E)-hexenoyl-CoA. The enzyme catalyses (3S)-hydroxydecanoyl-CoA = (2E)-decenoyl-CoA + H2O. The catalysed reaction is (3S)-hydroxyhexanoyl-CoA = (2E)-hexenoyl-CoA + H2O. It participates in lipid metabolism; fatty acid beta-oxidation. Its activity is regulated as follows. Enzyme activity enhanced by acetylation. In terms of biological role, peroxisomal trifunctional enzyme possessing 2-enoyl-CoA hydratase, 3-hydroxyacyl-CoA dehydrogenase, and delta 3, delta 2-enoyl-CoA isomerase activities. Catalyzes two of the four reactions of the long chain fatty acids peroxisomal beta-oxidation pathway. Can also use branched-chain fatty acids such as 2-methyl-2E-butenoyl-CoA as a substrate, which is hydrated into (2S,3S)-3-hydroxy-2-methylbutanoyl-CoA. Optimal isomerase for 2,5 double bonds into 3,5 form isomerization in a range of enoyl-CoA species. Also able to isomerize both 3-cis and 3-trans double bonds into the 2-trans form in a range of enoyl-CoA species. Regulates the amount of medium-chain dicarboxylic fatty acids which are essential regulators of all fatty acid oxidation pathways. Also involved in the degradation of long-chain dicarboxylic acids through peroxisomal beta-oxidation. The polypeptide is Peroxisomal bifunctional enzyme (EHHADH) (Cavia porcellus (Guinea pig)).